The chain runs to 372 residues: NAD(P)H-quinone oxidoreductase subunit 1 (372 aa).

Helical transmembrane passes span 27-47, 97-117, 128-148, 176-196, 204-224, 266-286, 308-328, and 347-367; these read IIWL…GVLV, ILFT…WLIV, VGIG…GLLM, LALS…IDIV, ILSW…ICAL, ILSA…PVPV, SIGI…AILL, and FLLP…LAFP.

This sequence belongs to the complex I subunit 1 family. NDH-1 is composed of at least 11 different subunits.

The protein localises to the cellular thylakoid membrane. It carries out the reaction a plastoquinone + NADH + (n+1) H(+)(in) = a plastoquinol + NAD(+) + n H(+)(out). The enzyme catalyses a plastoquinone + NADPH + (n+1) H(+)(in) = a plastoquinol + NADP(+) + n H(+)(out). In terms of biological role, NDH-1 shuttles electrons from an unknown electron donor, via FMN and iron-sulfur (Fe-S) centers, to quinones in the respiratory and/or the photosynthetic chain. The immediate electron acceptor for the enzyme in this species is believed to be plastoquinone. Couples the redox reaction to proton translocation, and thus conserves the redox energy in a proton gradient. The sequence is that of NAD(P)H-quinone oxidoreductase subunit 1 from Prochlorococcus marinus (strain AS9601).